A 258-amino-acid polypeptide reads, in one-letter code: Phosphate import ATP-binding protein PstB (258 aa).

In terms of domain architecture, ABC transporter spans 5–247; it reads LDLKGVNIYY…EKIFSNPSQK (243 aa). 37 to 44 lines the ATP pocket; sequence GPSGCGKT.

The protein belongs to the ABC transporter superfamily. Phosphate importer (TC 3.A.1.7) family. The complex is composed of two ATP-binding proteins (PstB), two transmembrane proteins (PstC and PstA) and a solute-binding protein (PstS).

It localises to the cell membrane. It catalyses the reaction phosphate(out) + ATP + H2O = ADP + 2 phosphate(in) + H(+). Functionally, part of the ABC transporter complex PstSACB involved in phosphate import. Responsible for energy coupling to the transport system. This chain is Phosphate import ATP-binding protein PstB, found in Mycolicibacterium paratuberculosis (strain ATCC BAA-968 / K-10) (Mycobacterium paratuberculosis).